We begin with the raw amino-acid sequence, 120 residues long: uncharacterized protein (120 aa).

2 consecutive transmembrane segments (helical) span residues 26–46 (PSTSLTIMLSVIAIRILPAGM) and 57–77 (LLFASFLLLSSFHYPITLTLV).

The protein resides in the membrane. This is an uncharacterized protein from Saccharomyces cerevisiae (strain ATCC 204508 / S288c) (Baker's yeast).